The following is a 202-amino-acid chain: Large ribosomal subunit protein eL13 (202 aa).

Residues 183 to 202 form a disordered region; sequence GIREKRAKEKAEAEAEKAKK.

The protein belongs to the eukaryotic ribosomal protein eL13 family. As to quaternary structure, component of the large ribosomal subunit. Mature ribosomes consist of a small (40S) and a large (60S) subunit. The 40S subunit contains about 32 different proteins and 1 molecule of RNA (18S). The 60S subunit contains 45 different proteins and 3 molecules of RNA (25S, 5.8S and 5S).

The protein resides in the cytoplasm. In terms of biological role, component of the ribosome, a large ribonucleoprotein complex responsible for the synthesis of proteins in the cell. The small ribosomal subunit (SSU) binds messenger RNAs (mRNAs) and translates the encoded message by selecting cognate aminoacyl-transfer RNA (tRNA) molecules. The large subunit (LSU) contains the ribosomal catalytic site termed the peptidyl transferase center (PTC), which catalyzes the formation of peptide bonds, thereby polymerizing the amino acids delivered by tRNAs into a polypeptide chain. The nascent polypeptides leave the ribosome through a tunnel in the LSU and interact with protein factors that function in enzymatic processing, targeting, and the membrane insertion of nascent chains at the exit of the ribosomal tunnel. The sequence is that of Large ribosomal subunit protein eL13 from Candida albicans (strain SC5314 / ATCC MYA-2876) (Yeast).